Consider the following 455-residue polypeptide: MRFAFDEIEETIRMVQAEKLDIRTITMGINLRDCVSDNVETLSNKIYDKITKKAKNLVKVANDLESEFGIPIVNKRISVTPIALISESAKSTEDFIKIAKALDAAAKEVGVNFIGGYSALVHKGFTDGDLRLINSIPEALSSTERVCSSINVATTKAGINMDAVALMGKIIKKTAELTKDKDGIGAAKLVVFCNAPGDNPFMAGAFHGVGEGECVINVGVSGPGVILAALSKLDNKADFGQISEIIKKTSFKIARAGELIGRLAAERLNTSFGILDLSLAPTPEIGDSIANILEAMGLSKCGAPGTTAALALLNDAVKKGGVMASSYVGGLSGAFIPVSEDAGMISAVEAGALSIEKLEAMTCVCSVGLDMIAIPGDTPAETISAIIADEMAIGMINKKTTAVRIIPVPGKKEGDHVEFGGLLGHAPVMKVNNFSADTFIKRGGRIPAPLQSLNN.

This sequence belongs to the UPF0210 family. As to quaternary structure, homodimer.

The polypeptide is UPF0210 protein Teth514_2074 (Thermoanaerobacter sp. (strain X514)).